The sequence spans 562 residues: MDAVSCAINALSAQAPPKHLGGNNVGRKSVTFPKDIWGDYFLKISPNEEKLDSWRVRAKELKEKVFDILSCAKGAEQVHIIDALYHLGVSYQFEKEIEEALKNMLTTYNDDTSTEDDLYTLALRFRLLRQNGFHASTKALNKFKDAHGSFREDLASDVMGLLSLYEASYAGTVDDLILDEALAFTKIHLKAALPHLDSHLAQRVSHSLELPLHKRIQRLEAREFISLCEKDDSIVIKELLEFAKLDYNILQALHQWELKELTKWWKKLNLVGKMTFARDRMTEIYFYVSGFFFEPQYSRGRIISSKILAICSVVDDEYDVYGTLDELQVFTDAICRLDVAAMENLPEYVKPLYEAIFFSLKEFEEELAREGNAYRVNYLREEVKNLCKSYLQETKWLHQRYIPTLEEYLLVSEISSTYTVIFNGCFVGCGEIATKEVFEWFQAFPKLLSDSARIGRIADDIMSCKFEQSRGHCPSAVECCMEEHQCTKEVALGNLDGVLGRAWKDMNKACMRPTPFPMEVLRPIVNLARMAEISYQYEDGYTFSGGKTKERISMLYKDPIPV.

Positions 315, 319, 459, and 467 each coordinate Mg(2+). Residues 315-319 carry the DDXXD motif motif; the sequence is DDEYD.

It belongs to the terpene synthase family. Tpsa subfamily. The cofactor is Mg(2+). Mn(2+) serves as cofactor. As to expression, expressed at low levels in stems, leaves, roots and fruits.

It catalyses the reaction (2E,6E)-farnesyl diphosphate = delta-cadinene + diphosphate. The enzyme catalyses (2E,6E)-farnesyl diphosphate = alpha-cadinene + diphosphate. It carries out the reaction (2E,6E)-farnesyl diphosphate + H2O = (-)-delta-cadinol + diphosphate. The protein operates within secondary metabolite biosynthesis; terpenoid biosynthesis. Sesquiterpene synthase involved in the biosynthesis of volatile compounds that contribute to the characteristic flavors of black pepper. Mediates the conversion of (2E,6E)-farnesyl diphosphate (FPP) into alpha-cadinene, delta-cadinene and delta-cadinol. The chain is Terpene synthase 2 from Piper nigrum (Black pepper).